A 745-amino-acid chain; its full sequence is Dipeptidyl aminopeptidase 4 (745 aa).

Residues 1–22 form the signal peptide; the sequence is MRLALFALFALMTVATALPAHA. Residues E208 and E209 each contribute to the substrate site. Residues S613, D689, and H721 each act as charge relay system in the active site.

Belongs to the peptidase S9B family. Homodimer.

It localises to the cytoplasm. It is found in the periplasm. The enzyme catalyses Release of an N-terminal dipeptide, Xaa-Yaa-|-Zaa-, from a polypeptide, preferentially when Yaa is Pro, provided Zaa is neither Pro nor hydroxyproline.. Completely inhibited by the serine protease inhibitor diisopropyl fluorophosphate (DFP) and moderately by N-tosyl-L-phenyl-alanyl chloromethyl ketone (TPCK). Somewhat inhibited by phenylmethanesulfonyl fluoride (PMSF). Activity is not affected by thiol- or metalloprotease inhibitors, such as iodoacetate (IAA), EDTA, N-tosyl-L-lysyl chloromethyl ketone (TLCK), o-phenanthlorine, N-ethylmaleimide (NEM) or dithiothreitol (DTT). Its function is as follows. Catalyzes the sequential release of Tyr-Pro, Phe-Pro and Gly-Pro from the N-terminus of peptides and proteins. Is able to cleaves bioactive peptide beta-casomorphin. The chain is Dipeptidyl aminopeptidase 4 from Pseudoxanthomonas mexicana.